The primary structure comprises 394 residues: D-aspartate oxidase (394 aa).

The FAD site is built by I19, A57, S58, and G62. Residues 190–210 (LIGHEPTAGVIVCVGLGALVL) form a helical membrane-spanning segment. N-linked (GlcNAc...) asparagine glycosylation is present at N214. R342, G373, and Q375 together coordinate FAD.

The protein belongs to the DAMOX/DASOX family. The cofactor is FAD.

Its subcellular location is the membrane. The enzyme catalyses D-aspartate + O2 + H2O = oxaloacetate + H2O2 + NH4(+). Its function is as follows. Selectively catalyzes the oxidative deamination of acidic amino acids. Protects the organism from the toxicity of D-amino acids. Enables the organism to utilize D-amino acids as a source of nutrients. Enables the organism to utilize D-aspartate and D-asparagine as a source of nitrogen. May play a role in its interaction with the host. This Cryptococcus neoformans var. grubii serotype A (strain H99 / ATCC 208821 / CBS 10515 / FGSC 9487) (Filobasidiella neoformans var. grubii) protein is D-aspartate oxidase.